Consider the following 274-residue polypeptide: 2,3,4,5-tetrahydropyridine-2,6-dicarboxylate N-succinyltransferase (274 aa).

Positions 103 and 140 each coordinate substrate.

This sequence belongs to the transferase hexapeptide repeat family. As to quaternary structure, homotrimer.

Its subcellular location is the cytoplasm. It catalyses the reaction (S)-2,3,4,5-tetrahydrodipicolinate + succinyl-CoA + H2O = (S)-2-succinylamino-6-oxoheptanedioate + CoA. It participates in amino-acid biosynthesis; L-lysine biosynthesis via DAP pathway; LL-2,6-diaminopimelate from (S)-tetrahydrodipicolinate (succinylase route): step 1/3. The protein is 2,3,4,5-tetrahydropyridine-2,6-dicarboxylate N-succinyltransferase of Pasteurella multocida (strain Pm70).